Here is a 164-residue protein sequence, read N- to C-terminus: Transcription antitermination protein NusB (164 aa).

It belongs to the NusB family.

In terms of biological role, involved in transcription antitermination. Required for transcription of ribosomal RNA (rRNA) genes. Binds specifically to the boxA antiterminator sequence of the ribosomal RNA (rrn) operons. The protein is Transcription antitermination protein NusB of Chlamydia muridarum (strain MoPn / Nigg).